The sequence spans 210 residues: 2,3-bisphosphoglycerate-dependent phosphoglycerate mutase (210 aa).

Substrate is bound by residues 9 to 16, 22 to 23, R61, 88 to 91, K99, 115 to 116, and 159 to 160; these read RHGQSEWN, TG, ERDY, RR, and GN. Residue H10 is the Tele-phosphohistidine intermediate of the active site. The active-site Proton donor/acceptor is E88.

This sequence belongs to the phosphoglycerate mutase family. BPG-dependent PGAM subfamily. As to quaternary structure, homodimer.

It catalyses the reaction (2R)-2-phosphoglycerate = (2R)-3-phosphoglycerate. It participates in carbohydrate degradation; glycolysis; pyruvate from D-glyceraldehyde 3-phosphate: step 3/5. Its function is as follows. Catalyzes the interconversion of 2-phosphoglycerate and 3-phosphoglycerate. This is 2,3-bisphosphoglycerate-dependent phosphoglycerate mutase from Parvibaculum lavamentivorans (strain DS-1 / DSM 13023 / NCIMB 13966).